Reading from the N-terminus, the 425-residue chain is Riboflavin biosynthesis protein RibBA (425 aa).

Residues 1 to 204 (MTRLDSVERA…IADLIEWRRK (204 aa)) are DHBP synthase. D-ribulose 5-phosphate-binding positions include 28 to 29 (RE), D33, 141 to 145 (RPGHT), and E165. E29 contributes to the Mg(2+) binding site. H144 lines the Mg(2+) pocket. Positions 205-425 (HEKHIERIAE…HLPGEFGGAL (221 aa)) are GTP cyclohydrolase II. 259 to 263 (RVHSE) serves as a coordination point for GTP. 3 residues coordinate Zn(2+): C264, C275, and C277. GTP-binding positions include Q280, 303 to 305 (EGR), and T325. Catalysis depends on D337, which acts as the Proton acceptor; for GTP cyclohydrolase activity. Catalysis depends on R339, which acts as the Nucleophile; for GTP cyclohydrolase activity. Residues T360 and K365 each coordinate GTP.

This sequence in the N-terminal section; belongs to the DHBP synthase family. It in the C-terminal section; belongs to the GTP cyclohydrolase II family. It depends on Mg(2+) as a cofactor. Mn(2+) is required as a cofactor. The cofactor is Zn(2+).

The enzyme catalyses D-ribulose 5-phosphate = (2S)-2-hydroxy-3-oxobutyl phosphate + formate + H(+). The catalysed reaction is GTP + 4 H2O = 2,5-diamino-6-hydroxy-4-(5-phosphoribosylamino)-pyrimidine + formate + 2 phosphate + 3 H(+). Its pathway is cofactor biosynthesis; riboflavin biosynthesis; 2-hydroxy-3-oxobutyl phosphate from D-ribulose 5-phosphate: step 1/1. It functions in the pathway cofactor biosynthesis; riboflavin biosynthesis; 5-amino-6-(D-ribitylamino)uracil from GTP: step 1/4. In terms of biological role, catalyzes the conversion of D-ribulose 5-phosphate to formate and 3,4-dihydroxy-2-butanone 4-phosphate. Catalyzes the conversion of GTP to 2,5-diamino-6-ribosylamino-4(3H)-pyrimidinone 5'-phosphate (DARP), formate and pyrophosphate. This is Riboflavin biosynthesis protein RibBA from Mycolicibacterium paratuberculosis (strain ATCC BAA-968 / K-10) (Mycobacterium paratuberculosis).